The sequence spans 300 residues: Ribosomal protein L11 methyltransferase (300 aa).

S-adenosyl-L-methionine is bound by residues T152, G173, D195, and N234.

The protein belongs to the methyltransferase superfamily. PrmA family.

Its subcellular location is the cytoplasm. It catalyses the reaction L-lysyl-[protein] + 3 S-adenosyl-L-methionine = N(6),N(6),N(6)-trimethyl-L-lysyl-[protein] + 3 S-adenosyl-L-homocysteine + 3 H(+). Methylates ribosomal protein L11. This chain is Ribosomal protein L11 methyltransferase, found in Cupriavidus necator (strain ATCC 17699 / DSM 428 / KCTC 22496 / NCIMB 10442 / H16 / Stanier 337) (Ralstonia eutropha).